We begin with the raw amino-acid sequence, 79 residues long: Putative membrane protein insertion efficiency factor (79 aa).

Belongs to the UPF0161 family.

Its subcellular location is the cell inner membrane. Could be involved in insertion of integral membrane proteins into the membrane. This is Putative membrane protein insertion efficiency factor from Synechocystis sp. (strain ATCC 27184 / PCC 6803 / Kazusa).